The primary structure comprises 290 residues: Ribosomal RNA small subunit methyltransferase A (290 aa).

S-adenosyl-L-methionine contacts are provided by Asn-27, Leu-29, Gly-54, Glu-75, Asp-100, and Asn-125.

This sequence belongs to the class I-like SAM-binding methyltransferase superfamily. rRNA adenine N(6)-methyltransferase family. RsmA subfamily.

Its subcellular location is the cytoplasm. It carries out the reaction adenosine(1518)/adenosine(1519) in 16S rRNA + 4 S-adenosyl-L-methionine = N(6)-dimethyladenosine(1518)/N(6)-dimethyladenosine(1519) in 16S rRNA + 4 S-adenosyl-L-homocysteine + 4 H(+). Its function is as follows. Specifically dimethylates two adjacent adenosines (A1518 and A1519) in the loop of a conserved hairpin near the 3'-end of 16S rRNA in the 30S particle. May play a critical role in biogenesis of 30S subunits. This Streptococcus agalactiae serotype V (strain ATCC BAA-611 / 2603 V/R) protein is Ribosomal RNA small subunit methyltransferase A.